The following is a 248-amino-acid chain: Transcription factor MYBC1 (248 aa).

Positions 102 to 161 form a DNA-binding region, myb-like GARP; sequence TLKRPRLVWTPQLHKRFVDAVGHLGIKNAVPKTIMQLMSVEGLTRENVASHLQKYRLYLR.

In terms of tissue distribution, expressed in roots, leaves, stems, petioles, filaments, stigma, pedicels, sepals, anthers, petals, and siliques.

Its subcellular location is the nucleus. Its function is as follows. Probable transcription factor that acts as a negative regulator of freezing tolerance via a CBF-independent pathway. In Arabidopsis thaliana (Mouse-ear cress), this protein is Transcription factor MYBC1.